A 511-amino-acid polypeptide reads, in one-letter code: MSVSALSSTRLPGSFSGFLQAAALLGLLLLLLKAAQLYLRRQWLLRALQQFPCPPSHWLLGHSREFPIDSELQQVLKRVEKFPSACPRWLWGSELFLICYDPDYMKTILGRSDPKARVSYSFLAPWIGYGLLLLEGQTWFQHRRMLTPAFHYDILKPYVGLMVDSVQVMLDKLEKLARKDAPLEIYEHVSLMTLETIMKCAFSHQGSVQLESRTSKSYIQAVRELSDLALQRVRNVFHQSDFLYRLSPEGRLSHRACQLAHEHTDRVIQQRKAQLQQEGELEKVRRKRRLDFLDVLLFAKMENGSSLSDQDLRAEVDTFMFEGHDTTASGISWIFYALATHPEHQHRCREEIQGLLGDGASITWEHLDKMPYTTMCIKEALRLYPPVPGVGSKLSSPVTFPDGRSLPKGIIITLSIYGLHHNPKVWPNPEVFDPSRFAPGSARHSHAFLPFSGGSRNCIGKQFAMNELKVAVALTLVRFELLPDPTRVPIPITRLVLKSKNGIHLRLRKLH.

Positions 1 to 4 (MSVS) are excised as a propeptide. Heme-binding residues include Glu322 and Cys458.

The protein belongs to the cytochrome P450 family. It depends on heme as a cofactor. In terms of tissue distribution, liver, kidney, small intestine.

Its subcellular location is the endoplasmic reticulum membrane. The protein resides in the microsome membrane. The catalysed reaction is an omega-methyl-long-chain fatty acid + reduced [NADPH--hemoprotein reductase] + O2 = an omega-hydroxy-long-chain fatty acid + oxidized [NADPH--hemoprotein reductase] + H2O + H(+). In terms of biological role, cytochromes P450 are a group of heme-thiolate monooxygenases. In liver microsomes, this enzyme is involved in an NADPH-dependent electron transport pathway. It oxidizes a variety of structurally unrelated compounds, including steroids, fatty acids, and xenobiotics. Its function is as follows. The kidney P-450 system is rather specialized for the omega-hydroxylation of fatty acids. Both P450-KA1 and P450-KA2 catalyze the omega- and (omega-1)-hydroxylation of various fatty acids with no drug-metabolizing activity, and hydroxylate prostaglandin A1 and A2 solely at the omega-position. This chain is Cytochrome P450 4A7 (CYP4A7), found in Oryctolagus cuniculus (Rabbit).